The chain runs to 318 residues: tRNA-cytidine(32) 2-sulfurtransferase (318 aa).

Residues 52-57 (SGGKDS) carry the PP-loop motif motif. 3 residues coordinate [4Fe-4S] cluster: C127, C130, and C218.

This sequence belongs to the TtcA family. Homodimer. It depends on Mg(2+) as a cofactor. [4Fe-4S] cluster serves as cofactor.

The protein resides in the cytoplasm. It catalyses the reaction cytidine(32) in tRNA + S-sulfanyl-L-cysteinyl-[cysteine desulfurase] + AH2 + ATP = 2-thiocytidine(32) in tRNA + L-cysteinyl-[cysteine desulfurase] + A + AMP + diphosphate + H(+). It participates in tRNA modification. Its function is as follows. Catalyzes the ATP-dependent 2-thiolation of cytidine in position 32 of tRNA, to form 2-thiocytidine (s(2)C32). The sulfur atoms are provided by the cysteine/cysteine desulfurase (IscS) system. In Actinobacillus pleuropneumoniae serotype 5b (strain L20), this protein is tRNA-cytidine(32) 2-sulfurtransferase.